The following is a 575-amino-acid chain: Hemagglutinin-neuraminidase (575 aa).

Over residues 1–10 (MDGDRGKRDS) the composition is skewed to basic and acidic residues. Residues 1-24 (MDGDRGKRDSYWSTSPSGSTTKLA) form a disordered region. At 1–37 (MDGDRGKRDSYWSTSPSGSTTKLASGWERSSKVDTWL) the chain is on the intravirion side. An incorporation in virion region spans residues 10–14 (SYWST). Polar residues predominate over residues 11–23 (YWSTSPSGSTTKL). The helical transmembrane segment at 38–58 (LILSFTQWALSIATVIICIII) threads the bilayer. The tract at residues 59-140 (SARQGYSMKE…RQELTQLCES (82 aa)) is involved in interaction with F protein. At 59–575 (SARQGYSMKE…SIPKLCKAES (517 aa)) the chain is on the virion surface side. An N-linked (GlcNAc...) asparagine; by host glycan is attached at Asn77. 4 cysteine pairs are disulfide-bonded: Cys192–Cys216, Cys258–Cys271, Cys357–Cys469, and Cys463–Cys473. Residues 254-259 (NRKSCS) form an involved in neuraminidase activity region. Asn499 and Asn511 each carry an N-linked (GlcNAc...) asparagine; by host glycan. Cys535 and Cys544 are disulfide-bonded.

It belongs to the paramyxoviruses hemagglutinin-neuraminidase family. Homotetramer; composed of disulfide-linked homodimers. Interacts with F protein trimer. Post-translationally, N-glycosylated; glycans consist of a mixture of high mannose-type oligosaccharides and of complex-type oligosaccharides.

It localises to the virion membrane. Its subcellular location is the host cell membrane. It carries out the reaction Hydrolysis of alpha-(2-&gt;3)-, alpha-(2-&gt;6)-, alpha-(2-&gt;8)- glycosidic linkages of terminal sialic acid residues in oligosaccharides, glycoproteins, glycolipids, colominic acid and synthetic substrates.. Its function is as follows. Attaches the virus to sialic acid-containing cell receptors and thereby initiating infection. Binding of HN protein to the receptor induces a conformational change that allows the F protein to trigger virion/cell membranes fusion. Neuraminidase activity ensures the efficient spread of the virus by dissociating the mature virions from the neuraminic acid containing glycoproteins. In Sendai virus (strain Fushimi) (SeV), this protein is Hemagglutinin-neuraminidase (HN).